The primary structure comprises 154 residues: Mating pheromone 2 (154 aa).

A signal peptide spans 1 to 16 (MKAIFIILAILMVTQA). The propeptide occupies 17–52 (FKMTSKVNTKLQSQIQSKFQSKNKLASTFQTSSQLK).

It localises to the secreted. Its function is as follows. Mating ciliate pheromones (or gamones) are diffusible extracellular communication signals that distinguish different intraspecific classes of cells commonly referred to as 'mating types'. They prepare the latter for conjugation by changing their cell surface properties. The sequence is that of Mating pheromone 2 from Euplotoides octocarinatus (Freshwater ciliate).